The chain runs to 209 residues: Large ribosomal subunit protein uL3 (209 aa).

The segment at Phe128–Met166 is disordered.

The protein belongs to the universal ribosomal protein uL3 family. Part of the 50S ribosomal subunit. Forms a cluster with proteins L14 and L19.

Functionally, one of the primary rRNA binding proteins, it binds directly near the 3'-end of the 23S rRNA, where it nucleates assembly of the 50S subunit. This chain is Large ribosomal subunit protein uL3, found in Chlorobaculum parvum (strain DSM 263 / NCIMB 8327) (Chlorobium vibrioforme subsp. thiosulfatophilum).